A 58-amino-acid polypeptide reads, in one-letter code: Large ribosomal subunit protein bL32 (58 aa).

Belongs to the bacterial ribosomal protein bL32 family.

In Sulfurihydrogenibium sp. (strain YO3AOP1), this protein is Large ribosomal subunit protein bL32.